A 363-amino-acid chain; its full sequence is Probable tRNA pseudouridine synthase D (363 aa).

Aspartate 82 acts as the Nucleophile in catalysis. Residues 151 to 363 (YLPAYIGYQR…IARTDPRLFT (213 aa)) form the TRUD domain.

Belongs to the pseudouridine synthase TruD family.

The catalysed reaction is uridine(13) in tRNA = pseudouridine(13) in tRNA. Functionally, could be responsible for synthesis of pseudouridine from uracil-13 in transfer RNAs. This is Probable tRNA pseudouridine synthase D from Sulfurisphaera tokodaii (strain DSM 16993 / JCM 10545 / NBRC 100140 / 7) (Sulfolobus tokodaii).